A 649-amino-acid chain; its full sequence is Nitrosuccinic acid synthase npaA (649 aa).

It belongs to the nitrosuccinic acid synthase family. FAD serves as cofactor.

It carries out the reaction L-aspartate + 3 NADPH + 3 O2 + 2 H(+) = 2-nitrobutanedioate + 3 NADP(+) + 4 H2O. The protein operates within mycotoxin biosynthesis. Nitrosuccinic acid synthase; part of the gene cluster that mediates the biosynthesis of the deadly neurotoxic nitroalkane 3-nitropropanoic acid (3-NPA) that acts as an antimetabolite of succinate and irreversibly inhibits succinate dehydrogenase and disrupts mitochondrial oxidative phosphorylation. NpaA catalyzes the iterative oxidation of L-aspartic acid to nitrosuccinic acid (2-nitrobutanedioate). Alternative amino acid substrates such as L-glutamate and D-aspartate are not accepted by npaA as a substrate, showing the strict substrate specificity toward L-aspartate. The nitrosuccinic acid decarboxylase npaB then facilitates decarboxylation of Nitrosuccinic acid to produce 3-NPA. This is Nitrosuccinic acid synthase npaA from Aspergillus oryzae (strain ATCC 42149 / RIB 40) (Yellow koji mold).